The following is a 348-amino-acid chain: MDLIHTFLNLIAPPFTFFFLLFFLPPFQIFKFFLSILGTLFSEDVAGKVVVITGASSGIGESLAYEYAKRGACLVLAARRERSLQEVAERARDLGSPDVVVVRADVSKAEDCRKVVDQTMNRFGRLDHLVNNAGIMSVSMLEEVEDITGYRETMDINFWGYVYMTRFAAPYLRNSRGRIVVLSSSSSWMPTPRMSFYNASKAAISQFFETLRVEFGPDIGITLVTPGFIESELTQGKFYNAGERVIDQDMRDVQVSTTPILRVESAARSIVRSAIRGERYVTEPAWFRVTYWWKLFCPEVMEWVFRLMYLASPGEPEKETFGKKVLDYTGVKSLLYPETVQVPEPKND.

The chain crosses the membrane as a helical; Signal-anchor for type II membrane protein span at residues 10 to 30 (LIAPPFTFFFLLFFLPPFQIF). The Proline-knob signature appears at 13-26 (PPFTFFFLLFFLPP). NADP(+)-binding positions include 54–80 (GASS…AARR), Asp-105, and 132–135 (NAGI). Ser-184 serves as a coordination point for substrate. Tyr-197 serves as the catalytic Proton acceptor. NADP(+)-binding positions include 197–201 (YNASK) and Lys-201.

The protein belongs to the short-chain dehydrogenases/reductases (SDR) family. Expressed in seeds (at protein level). Not expressed in stem, leaf or root (at protein level).

The protein localises to the lipid droplet. The protein resides in the membrane. It carries out the reaction an 11beta-hydroxysteroid + NADP(+) = an 11-oxosteroid + NADPH + H(+). It catalyses the reaction an 11beta-hydroxysteroid + NAD(+) = an 11-oxosteroid + NADH + H(+). The catalysed reaction is corticosterone + NADP(+) = 11-dehydrocorticosterone + NADPH + H(+). The enzyme catalyses corticosterone + NAD(+) = 11-dehydrocorticosterone + NADH + H(+). It carries out the reaction 17beta-estradiol + NADP(+) = estrone + NADPH + H(+). It catalyses the reaction 17beta-estradiol + NAD(+) = estrone + NADH + H(+). Has dehydrogenase activity against corticosterone (11 beta-hydroxysteroid) and estradiol (17 beta-hydroxysteroid), with higher activity against estradiol. Possesses higher dehydrogenase activity with NADP(+) than NAD(+) regardless of the sterol substrate. May be involved in signal transduction regulated by various sterols. This chain is 11-beta-hydroxysteroid dehydrogenase A, found in Sesamum indicum (Oriental sesame).